The sequence spans 444 residues: E1B 55 kDa protein (444 aa).

The interval 1-42 (MEQDSDLESGRATNQRPPRVRVRGAGVRGRGRVRRRALSEGQ) is disordered. 2 positions are modified to phosphoserine: Ser438 and Ser439.

This sequence belongs to the adenoviridae E1B 55 kDa protein family. As to quaternary structure, interacts with host PML-4 and PML-5; this interaction promotes efficient subnuclear targeting of E1B-55K to PML nuclear bodies. Interacts with E4-ORF3 protein. Interacts with E4-ORF6 protein.

The protein resides in the host nucleus. It is found in the host cytoplasm. Its function is as follows. Plays a major role to prevent cellular inhibition of viral genome replication. Assembles an SCF-like E3 ubiquitin ligase complex based on the cellular proteins ELOB, ELOC, CUL5 and RBX1, in cooperation with viral E4orf6. This viral RING-type ligase ubiquitinates cellular substrates and targets them to proteasomal degradation: TP53/p53, LIG4, MRE11-RAD50-NBS1 (MRN) complex, ITGA3, DAXX and BLM. E1B-55K probably acts as the substrate-specific adapter of the SCF-like E3 ubiquitin ligase complex. Degradation of host TP53/p53 activity is essential for preventing E1A-induced TP53 accumulation that would otherwise lead to cell apoptosis and growth arrest. E1B-55K also inactivates TP53 transcription-factor activity by binding its transactivation domain. E1B-55K also functions as a SUMO1 E3 ligase for TP53 which causes the latter to be sequestered in promyelocytic leukemia (PML) nuclear bodies thereby contributing to maximal inhibition of TP53 function. This chain is E1B 55 kDa protein, found in Canis lupus familiaris (Dog).